A 176-amino-acid chain; its full sequence is NAD(P)H-quinone oxidoreductase subunit 6, chloroplastic (176 aa).

5 helical membrane passes run F10–T30, I33–A53, L63–G83, I105–W125, and F152–A172.

It belongs to the complex I subunit 6 family. As to quaternary structure, NDH is composed of at least 16 different subunits, 5 of which are encoded in the nucleus.

It localises to the plastid. The protein resides in the chloroplast thylakoid membrane. The enzyme catalyses a plastoquinone + NADH + (n+1) H(+)(in) = a plastoquinol + NAD(+) + n H(+)(out). It carries out the reaction a plastoquinone + NADPH + (n+1) H(+)(in) = a plastoquinol + NADP(+) + n H(+)(out). Functionally, NDH shuttles electrons from NAD(P)H:plastoquinone, via FMN and iron-sulfur (Fe-S) centers, to quinones in the photosynthetic chain and possibly in a chloroplast respiratory chain. The immediate electron acceptor for the enzyme in this species is believed to be plastoquinone. Couples the redox reaction to proton translocation, and thus conserves the redox energy in a proton gradient. The polypeptide is NAD(P)H-quinone oxidoreductase subunit 6, chloroplastic (ndhG) (Spinacia oleracea (Spinach)).